We begin with the raw amino-acid sequence, 214 residues long: Probable transaldolase (214 aa).

Lysine 83 (schiff-base intermediate with substrate) is an active-site residue.

This sequence belongs to the transaldolase family. Type 3B subfamily.

Its subcellular location is the cytoplasm. The enzyme catalyses D-sedoheptulose 7-phosphate + D-glyceraldehyde 3-phosphate = D-erythrose 4-phosphate + beta-D-fructose 6-phosphate. It participates in carbohydrate degradation; pentose phosphate pathway; D-glyceraldehyde 3-phosphate and beta-D-fructose 6-phosphate from D-ribose 5-phosphate and D-xylulose 5-phosphate (non-oxidative stage): step 2/3. Its function is as follows. Transaldolase is important for the balance of metabolites in the pentose-phosphate pathway. This is Probable transaldolase from Geobacter sulfurreducens (strain ATCC 51573 / DSM 12127 / PCA).